The primary structure comprises 287 residues: Festuclavine synthase II (287 aa).

Belongs to the fgaFS/easG family.

The enzyme catalyses festuclavine + NAD(+) = 6,8-dimethyl-6,7-didehydroergoline + NADH + H(+). Its pathway is alkaloid biosynthesis; ergot alkaloid biosynthesis. Festuclavine synthase; part of the gene cluster that mediates the biosynthesis of isofumigaclavines, fungal ergot alkaloids. The tryptophan dimethylallyltransferase ifgA catalyzes the first step of ergot alkaloid biosynthesis by condensing dimethylallyl diphosphate (DMAP) and tryptophan to form 4-dimethylallyl-L-tryptophan. The second step is catalyzed by the methyltransferase ifgB that methylates 4-dimethylallyl-L-tryptophan in the presence of S-adenosyl-L-methionine, resulting in the formation of N-methyl-dimethylallyl-L-tryptophan. The catalase ifgD and the FAD-dependent oxidoreductase ifgC then transform N-methyl-dimethylallyl-L-tryptophan to chanoclavine-I which is further oxidized by ifgE in the presence of NAD(+), resulting in the formation of chanoclavine-I aldehyde. The chanoclavine-I aldehyde reductases ifgG and/or fgaOx3 reduce chanoclavine-I aldehyde to dihydrochanoclavine-I aldehyde that spontaneously dehydrates to form 6,8-dimethyl-6,7-didehydroergoline. The festuclavine dehydrogenases ifgF1 and/or ifgF2 then catalyze the reduction of 6,8-dimethyl-6,7-didehydroergoline to form festuclavine. Hydrolysis of festuclavine by a yet undetermined cytochrome P450 monooxygenase (called ifgH) then leads to the formation of isofumigaclavine B which is in turn acetylated by ifgI to isofumigaclavine A. Penicillium roqueforti has interestingly at least two sets of genes for the consumption of chanoclavine-I aldehyde on three different loci, the OYEs ifgG/fgaOx3 and the festuclavine synthase homologs ifgF1/ifgF2. The reason for the duplication of these genes is unclear, probably to ensure the conversion of chanoclavine-I aldehyde by differential gene expression under various environmental conditions. This chain is Festuclavine synthase II, found in Penicillium roqueforti (strain FM164).